The chain runs to 585 residues: MASPGSGFWSFGSEDGSGDSENPGTARAWCQVAQKFTGGIGNKLCALLYGDAEKPAESGGSQPPRAAARKAACACDQKPCSCSKVDVNYAFLHATDLLPACDGERPTLAFLQDVMNILLQYVVKSFDRSTKVIDFHYPNELLQEYNWELADQPQNLEEILMHCQTTLKYAIKTGHPRYFNQLSTGLDMVGLAADWLTSTANTNMFTYEIAPVFVLLEYVTLKKMREIIGWPGGSGDGIFSPGGAISNMYAMMIARFKMFPEVKEKGMAALPRLIAFTSEHSHFSLKKGAAALGIGTDSVILIKCDERGKMIPSDLERRILEAKQKGFVPFLVSATAGTTVYGAFDPLLAVADICKKYKIWMHVDAAWGGGLLMSRKHKWKLSGVERANSVTWNPHKMMGVPLQCSALLVREEGLMQNCNQMHASYLFQQDKHYDLSYDTGDKALQCGRHVDVFKLWLMWRAKGTTGFEAHVDKCLELAEYLYNIIKNREGYEMVFDGKPQHTNVCFWYIPPSLRTLEDNEERMSRLSKVAPVIKARMMEYGTTMVSYQPLGDKVNFFRMVISNPAATHQDIDFLIEEIERLGQDL.

Positions Met1–Glu14 are enriched in low complexity. The interval Met1–Gly24 is disordered. Residues Ser3, Ser6, Ser10, and Ser13 each carry the phosphoserine modification. S-palmitoyl cysteine attachment occurs at residues Cys30 and Cys45. A substrate-binding site is contributed by Gln181 to Ser183. An N6-(pyridoxal phosphate)lysine modification is found at Lys396. Arg558 lines the substrate pocket.

It belongs to the group II decarboxylase family. As to quaternary structure, homodimer. Requires pyridoxal 5'-phosphate as cofactor. Phosphorylated; which does not affect kinetic parameters or subcellular location. Post-translationally, palmitoylated; which is required for presynaptic clustering.

Its subcellular location is the cytoplasm. It is found in the cytosol. The protein localises to the cytoplasmic vesicle. The protein resides in the presynaptic cell membrane. It localises to the golgi apparatus membrane. The catalysed reaction is L-glutamate + H(+) = 4-aminobutanoate + CO2. In terms of biological role, catalyzes the production of GABA. The sequence is that of Glutamate decarboxylase 2 from Homo sapiens (Human).